We begin with the raw amino-acid sequence, 127 residues long: Small ribosomal subunit protein uS11 (127 aa).

It belongs to the universal ribosomal protein uS11 family. As to quaternary structure, part of the 30S ribosomal subunit. Interacts with proteins S7 and S18. Binds to IF-3.

Functionally, located on the platform of the 30S subunit, it bridges several disparate RNA helices of the 16S rRNA. Forms part of the Shine-Dalgarno cleft in the 70S ribosome. The protein is Small ribosomal subunit protein uS11 of Anaeromyxobacter dehalogenans (strain 2CP-C).